A 494-amino-acid polypeptide reads, in one-letter code: MFKFALALTLCLAGASLSLAQHNPQWWGSRNTIVHLFEWKWSDIAEECETFLAPRGFAGVQVSPVNENIISAGRPWWERYQPISYKLTTRSGNEEEFADMVRRCNDVGIRIYVDVLLNHMSGDFDGVAVGTAGTEAEPSKKSFPGVPYTAQDFHPSCEITDWNNRFQVQECELVGLKDLNQHSDYVRSKLIEFLDHLIELGVAGFRVDAAKHMAAEDLEYIYGSLSNLNIEHGFPHNARPFIFQEVIDHGHETVSRDEYNELGAVTEFRFSEEIGKAFRGNNALKWLQSWGSDWGFLNSEQALTFVDNHDNQRDHGSVLNYKSPKQYKMATAFHLAYPYGISRVMSSFAFDDHDTPPPQDAQENIISPEFDEDGACVNGWICEHRWRQIYAMVGFKNAVRDTELSGWWDNGDNQISFCRGNNGFLAVNNNLYDLSQELNTCLPAGEYCDVISGSLIDGACTGKSVTVNEHGYGYIHIGSDEFDGVLALHVNAKL.

The first 20 residues, 1 to 20 (MFKFALALTLCLAGASLSLA), serve as a signal peptide directing secretion. Q21 is modified (pyrrolidone carboxylic acid). C48 and C104 are disulfide-bonded. Residues N118, Q169, and D178 each coordinate Ca(2+). Cysteines 157 and 171 form a disulfide. A chloride-binding site is contributed by R206. D208 functions as the Nucleophile in the catalytic mechanism. Ca(2+) is bound at residue H212. E245 acts as the Proton donor in catalysis. Residues N308 and R343 each contribute to the chloride site. Intrachain disulfides connect C376–C382, C418–C441, and C448–C460.

Belongs to the glycosyl hydrolase 13 family. Monomer. Requires Ca(2+) as cofactor. Chloride is required as a cofactor.

Its subcellular location is the secreted. The enzyme catalyses Endohydrolysis of (1-&gt;4)-alpha-D-glucosidic linkages in polysaccharides containing three or more (1-&gt;4)-alpha-linked D-glucose units.. This is Alpha-amylase-related protein (Amyrel) from Drosophila dossoui (Fruit fly).